The primary structure comprises 160 residues: Large ribosomal subunit protein eL21 (160 aa).

Basic and acidic residues-rich tracts occupy residues 112–123 (NDQKKKEAKEKG) and 136–145 (REAHFVRTNG). A disordered region spans residues 112–145 (NDQKKKEAKEKGTWVQLKRQPAPPREAHFVRTNG).

This sequence belongs to the eukaryotic ribosomal protein eL21 family. Component of the large ribosomal subunit.

The protein resides in the cytoplasm. The protein localises to the cytosol. It is found in the endoplasmic reticulum. In terms of biological role, component of the large ribosomal subunit. The ribosome is a large ribonucleoprotein complex responsible for the synthesis of proteins in the cell. In Oryctolagus cuniculus (Rabbit), this protein is Large ribosomal subunit protein eL21 (RPL21).